The following is a 446-amino-acid chain: tRNA-2-methylthio-N(6)-dimethylallyladenosine synthase (446 aa).

The MTTase N-terminal domain occupies K3 to K119. Residues C12, C48, C82, C158, C162, and C165 each coordinate [4Fe-4S] cluster. A Radical SAM core domain is found at K144–K374. Residues K377 to E439 form the TRAM domain.

It belongs to the methylthiotransferase family. MiaB subfamily. As to quaternary structure, monomer. The cofactor is [4Fe-4S] cluster.

It is found in the cytoplasm. The enzyme catalyses N(6)-dimethylallyladenosine(37) in tRNA + (sulfur carrier)-SH + AH2 + 2 S-adenosyl-L-methionine = 2-methylsulfanyl-N(6)-dimethylallyladenosine(37) in tRNA + (sulfur carrier)-H + 5'-deoxyadenosine + L-methionine + A + S-adenosyl-L-homocysteine + 2 H(+). In terms of biological role, catalyzes the methylthiolation of N6-(dimethylallyl)adenosine (i(6)A), leading to the formation of 2-methylthio-N6-(dimethylallyl)adenosine (ms(2)i(6)A) at position 37 in tRNAs that read codons beginning with uridine. The chain is tRNA-2-methylthio-N(6)-dimethylallyladenosine synthase from Pelagibacter ubique (strain HTCC1062).